A 110-amino-acid chain; its full sequence is Iron-sulfur cluster assembly protein CyaY (110 aa).

This sequence belongs to the frataxin family.

Involved in iron-sulfur (Fe-S) cluster assembly. May act as a regulator of Fe-S biogenesis. The sequence is that of Iron-sulfur cluster assembly protein CyaY from Pseudomonas putida (strain W619).